Consider the following 502-residue polypeptide: ATP synthase subunit alpha (502 aa).

Residues 115 to 139 (VDGLGPVETTETRPIESPAPGVMDR) form a disordered region. 169-176 (GDRQTGKT) contacts ATP.

The protein belongs to the ATPase alpha/beta chains family. F-type ATPases have 2 components, CF(1) - the catalytic core - and CF(0) - the membrane proton channel. CF(1) has five subunits: alpha(3), beta(3), gamma(1), delta(1), epsilon(1). CF(0) has three main subunits: a(1), b(2) and c(9-12). The alpha and beta chains form an alternating ring which encloses part of the gamma chain. CF(1) is attached to CF(0) by a central stalk formed by the gamma and epsilon chains, while a peripheral stalk is formed by the delta and b chains.

It localises to the cell membrane. It catalyses the reaction ATP + H2O + 4 H(+)(in) = ADP + phosphate + 5 H(+)(out). Produces ATP from ADP in the presence of a proton gradient across the membrane. The alpha chain is a regulatory subunit. In Geobacillus thermodenitrificans (strain NG80-2), this protein is ATP synthase subunit alpha.